Consider the following 466-residue polypeptide: Ribulose bisphosphate carboxylase large chain (466 aa).

The residue at position 5 (Lys5) is an N6,N6,N6-trimethyllysine. Residues Asn114 and Thr164 each coordinate substrate. The active-site Proton acceptor is the Lys166. A substrate-binding site is contributed by Lys168. Lys192, Asp194, and Glu195 together coordinate Mg(2+). N6-carboxylysine is present on Lys192. The Proton acceptor role is filled by His285. Residues Arg286, His318, and Ser370 each contribute to the substrate site.

This sequence belongs to the RuBisCO large chain family. Type I subfamily. As to quaternary structure, heterohexadecamer of 8 large chains and 8 small chains; disulfide-linked. The disulfide link is formed within the large subunit homodimers. Requires Mg(2+) as cofactor. In terms of processing, the disulfide bond which can form in the large chain dimeric partners within the hexadecamer appears to be associated with oxidative stress and protein turnover.

It is found in the plastid. It localises to the chloroplast. It carries out the reaction 2 (2R)-3-phosphoglycerate + 2 H(+) = D-ribulose 1,5-bisphosphate + CO2 + H2O. It catalyses the reaction D-ribulose 1,5-bisphosphate + O2 = 2-phosphoglycolate + (2R)-3-phosphoglycerate + 2 H(+). RuBisCO catalyzes two reactions: the carboxylation of D-ribulose 1,5-bisphosphate, the primary event in carbon dioxide fixation, as well as the oxidative fragmentation of the pentose substrate in the photorespiration process. Both reactions occur simultaneously and in competition at the same active site. The chain is Ribulose bisphosphate carboxylase large chain from Tropaeolum majus (Common nasturtium).